The chain runs to 234 residues: Ribonuclease 3 (234 aa).

One can recognise an RNase III domain in the interval 13 to 136 (YITLEKALGY…LMAGVYLEAG (124 aa)). Glu-49 lines the Mg(2+) pocket. Asp-53 is an active-site residue. Residues Ser-122 and Glu-125 each contribute to the Mg(2+) site. Residue Glu-125 is part of the active site. The region spanning 163-232 (DYKTALQELT…AYQALQKLKG (70 aa)) is the DRBM domain.

Belongs to the ribonuclease III family. As to quaternary structure, homodimer. Requires Mg(2+) as cofactor.

It is found in the cytoplasm. It carries out the reaction Endonucleolytic cleavage to 5'-phosphomonoester.. In terms of biological role, digests double-stranded RNA. Involved in the processing of primary rRNA transcript to yield the immediate precursors to the large and small rRNAs (23S and 16S). Processes some mRNAs, and tRNAs when they are encoded in the rRNA operon. Processes pre-crRNA and tracrRNA of type II CRISPR loci if present in the organism. In Helicobacter acinonychis (strain Sheeba), this protein is Ribonuclease 3.